A 246-amino-acid chain; its full sequence is Polyhedrin (246 aa).

The protein belongs to the polyhedrin family.

In terms of biological role, major component of the virus occlusion bodies, which are large proteinaceous structures (polyhedra), that protect the virus from the outside environment for extended periods until they are ingested by insect larvae. The protein is Polyhedrin (PH) of Mamestra brassicae nuclear polyhedrosis virus (MbNPV).